The following is a 465-amino-acid chain: Alpha-2A adrenergic receptor (465 aa).

Residues 1-48 (MFRQEQPLAEGSFAPMGSLQPDAGNSSWNGTEAPGGGTRATPYSLQVT) are Extracellular-facing. Asparagine 25 and asparagine 29 each carry an N-linked (GlcNAc...) asparagine glycan. The helical transmembrane segment at 49-74 (LTLVCLAGLLMLFTVFGNVLVIIAVF) threads the bilayer. The Cytoplasmic segment spans residues 75–85 (TSRALKAPQNL). A helical membrane pass occupies residues 86–111 (FLVSLASADILVATLVIPFSLANEVM). Residues 112–121 (GYWYFGKVWC) are Extracellular-facing. Residues cysteine 121 and cysteine 203 are joined by a disulfide bond. The chain crosses the membrane as a helical span at residues 122–144 (EIYLALDVLFCTSSIVHLCAISL). The Cytoplasmic portion of the chain corresponds to 145 to 164 (DRYWSITQAIEYNLKRTPRR). Residues 165 to 188 (IKAIIVTVWVISAVISFPPLISIE) form a helical membrane-spanning segment. At 189 to 207 (KKGAGGGQQPAEPSCKIND) the chain is on the extracellular side. Residues 208–232 (QKWYVISSSIGSFFAPCLIMILVYV) form a helical membrane-spanning segment. Residues 233-389 (RIYQIAKRRT…RQNREKRFTF (157 aa)) lie on the Cytoplasmic side of the membrane. The interval 242-378 (TRVPPSRRGP…GGGAKASRWR (137 aa)) is disordered. The span at 313 to 330 (SSEHAERPPGPRRPDRGP) shows a compositional bias: basic and acidic residues. Serine 346 carries the post-translational modification Phosphoserine. Gly residues predominate over residues 353-363 (GAAGPGASGSG). Arginine 368 is modified (omega-N-methylarginine). Residues 390–414 (VLAVVIGVFVVCWFPFFFTYTLIAV) form a helical membrane-spanning segment. Residues 415–424 (GCPVPSQLFN) are Extracellular-facing. Residues 425–445 (FFFWFGYCNSSLNPVIYTIFN) traverse the membrane as a helical segment. Residues 446–465 (HDFRRAFKKILCRGDRKRIV) are Cytoplasmic-facing. A lipid anchor (S-palmitoyl cysteine) is attached at cysteine 457.

It belongs to the G-protein coupled receptor 1 family. Adrenergic receptor subfamily. ADRA2A sub-subfamily.

It is found in the cell membrane. Functionally, alpha-2 adrenergic receptors mediate the catecholamine-induced inhibition of adenylate cyclase through the action of G proteins. The protein is Alpha-2A adrenergic receptor of Mus musculus (Mouse).